The following is a 126-amino-acid chain: Arginine decarboxylase proenzyme (126 aa).

The active-site Schiff-base intermediate with substrate; via pyruvic acid is Ser-74. Position 74 is a pyruvic acid (Ser); by autocatalysis (Ser-74). The active-site Proton acceptor; for processing activity is His-79. Cys-94 serves as the catalytic Proton donor; for catalytic activity.

This sequence belongs to the prokaryotic AdoMetDC family. Type 1 subfamily. As to quaternary structure, heterooctamer of four alpha and four beta chains arranged as a tetramer of alpha/beta heterodimers. It depends on pyruvate as a cofactor. In terms of processing, is synthesized initially as an inactive proenzyme. Formation of the active enzyme involves a self-maturation process in which the active site pyruvoyl group is generated from an internal serine residue via an autocatalytic post-translational modification. Two non-identical subunits are generated from the proenzyme in this reaction, and the pyruvate is formed at the N-terminus of the alpha chain, which is derived from the carboxyl end of the proenzyme. The post-translation cleavage follows an unusual pathway, termed non-hydrolytic serinolysis, in which the side chain hydroxyl group of the serine supplies its oxygen atom to form the C-terminus of the beta chain, while the remainder of the serine residue undergoes an oxidative deamination to produce ammonia and the pyruvoyl group blocking the N-terminus of the alpha chain.

The enzyme catalyses L-arginine + H(+) = agmatine + CO2. Its pathway is amine and polyamine biosynthesis; agmatine biosynthesis; agmatine from L-arginine: step 1/1. Specifically catalyzes the decarboxylation of L-arginine to agmatine. Has no S-adenosylmethionine decarboxylase (AdoMetDC) activity. The polypeptide is Arginine decarboxylase proenzyme (Pyrobaculum islandicum (strain DSM 4184 / JCM 9189 / GEO3)).